A 222-amino-acid polypeptide reads, in one-letter code: Cytidylate kinase (222 aa).

7-15 (GPAGAGKST) contacts ATP.

The protein belongs to the cytidylate kinase family. Type 1 subfamily.

It is found in the cytoplasm. The catalysed reaction is CMP + ATP = CDP + ADP. It catalyses the reaction dCMP + ATP = dCDP + ADP. The sequence is that of Cytidylate kinase from Carboxydothermus hydrogenoformans (strain ATCC BAA-161 / DSM 6008 / Z-2901).